Here is a 567-residue protein sequence, read N- to C-terminus: Urease subunit alpha (567 aa).

In terms of domain architecture, Urease spans Gly129–Phe567. Residues His134, His136, and Lys217 each coordinate Ni(2+). Lys217 carries the post-translational modification N6-carboxylysine. His219 lines the substrate pocket. Ni(2+) contacts are provided by His246 and His272. The Proton donor role is filled by His320. Asp360 provides a ligand contact to Ni(2+).

The protein belongs to the metallo-dependent hydrolases superfamily. Urease alpha subunit family. Heterotrimer of UreA (gamma), UreB (beta) and UreC (alpha) subunits. Three heterotrimers associate to form the active enzyme. Ni cation serves as cofactor. Post-translationally, carboxylation allows a single lysine to coordinate two nickel ions.

The protein resides in the cytoplasm. It carries out the reaction urea + 2 H2O + H(+) = hydrogencarbonate + 2 NH4(+). It participates in nitrogen metabolism; urea degradation; CO(2) and NH(3) from urea (urease route): step 1/1. This chain is Urease subunit alpha, found in Psychromonas ingrahamii (strain DSM 17664 / CCUG 51855 / 37).